We begin with the raw amino-acid sequence, 132 residues long: MAKEFSRTQRVAQEMQKEIAIIIQREVKDPRIGMATVSGVEVSRDLAYAKVFVTFLNDNEPEQVKTALKALQDASGFIRTLVGKAMRLRVVPALTFSYDNSLVEGMRMSNLVTNVVRNDTERRSVTGEDQED.

This sequence belongs to the RbfA family. As to quaternary structure, monomer. Binds 30S ribosomal subunits, but not 50S ribosomal subunits or 70S ribosomes.

The protein resides in the cytoplasm. One of several proteins that assist in the late maturation steps of the functional core of the 30S ribosomal subunit. Associates with free 30S ribosomal subunits (but not with 30S subunits that are part of 70S ribosomes or polysomes). Required for efficient processing of 16S rRNA. May interact with the 5'-terminal helix region of 16S rRNA. The chain is Ribosome-binding factor A from Pectobacterium carotovorum subsp. carotovorum (strain PC1).